The following is a 455-amino-acid chain: Folate transporter 2 (455 aa).

Transmembrane regions (helical) follow at residues 42–64 (IVVYLVGLSDGLTHLASLAIYYL), 84–103 (YIPFILKPVIALITDSFSIF), 110–131 (YLFLFSLFQSLNFLALAFLNLS), 137–157 (LILFFISLCASFCTTVAEALV), 177–195 (IASKAIGSLSVAYFSGYFL), 201–221 (EYIFIATSIFPLIISLSCLFL), 242–261 (FINTPIFLGPFLYIFVYMSG), and 281–301 (SFMGTLRLTYGIASLIGIIIY). An N-linked (GlcNAc...) asparagine glycan is attached at asparagine 307. 2 helical membrane-spanning segments follow: residues 313–331 (TLIITTLVSFPIYISPIIL) and 347–367 (VLSGGFLIEAITEIQLLPLFI). N-linked (GlcNAc...) asparagine glycosylation is present at asparagine 416. The helical transmembrane segment at 417-438 (LSLYILTCGFFLLFSLTLVPLL) threads the bilayer.

Belongs to the major facilitator superfamily. Folate-biopterin transporter (TC 2.A.71) family.

It localises to the cell membrane. It catalyses the reaction folate(in) + H(+)(in) = folate(out) + H(+)(out). The enzyme catalyses (6S)-5-methyl-5,6,7,8-tetrahydrofolate(in) + H(+)(in) = (6S)-5-methyl-5,6,7,8-tetrahydrofolate(out) + H(+)(out). Transport of folates is inhibited by probenecid and methotrexate. Functionally, folate transporter with broad substrate specificity. Transports folic acid, folinic acid, pteroic acid, dihydropteroic acid, the folate precursor p-amino benzoic acid (pABA) and the human folate catabolite pABA monoglutamate. Can transport 5-methyltetrahydrofolate with low efficiency. In Plasmodium falciparum (isolate 3D7), this protein is Folate transporter 2.